The primary structure comprises 199 residues: Probable NADH dehydrogenase [ubiquinone] iron-sulfur protein 7, mitochondrial (199 aa).

Cys74, Cys75, Cys139, and Cys169 together coordinate [4Fe-4S] cluster.

Belongs to the complex I 20 kDa subunit family. In terms of assembly, complex I is composed of 45 different subunits This is a component of the iron-sulfur (IP) fragment of the enzyme. [4Fe-4S] cluster is required as a cofactor.

The protein localises to the mitochondrion. It catalyses the reaction a ubiquinone + NADH + 5 H(+)(in) = a ubiquinol + NAD(+) + 4 H(+)(out). Functionally, core subunit of the mitochondrial membrane respiratory chain NADH dehydrogenase (Complex I) that is believed to belong to the minimal assembly required for catalysis. Complex I functions in the transfer of electrons from NADH to the respiratory chain. The immediate electron acceptor for the enzyme is believed to be ubiquinone. This Caenorhabditis elegans protein is Probable NADH dehydrogenase [ubiquinone] iron-sulfur protein 7, mitochondrial (nduf-7).